We begin with the raw amino-acid sequence, 549 residues long: Glucose-6-phosphate isomerase (549 aa).

N6-acetyllysine is present on residues K80, K228, and K234. E355 acts as the Proton donor in catalysis. Catalysis depends on residues H386 and K514.

Belongs to the GPI family.

It localises to the cytoplasm. It carries out the reaction alpha-D-glucose 6-phosphate = beta-D-fructose 6-phosphate. It participates in carbohydrate biosynthesis; gluconeogenesis. The protein operates within carbohydrate degradation; glycolysis; D-glyceraldehyde 3-phosphate and glycerone phosphate from D-glucose: step 2/4. Catalyzes the reversible isomerization of glucose-6-phosphate to fructose-6-phosphate. In Escherichia coli O127:H6 (strain E2348/69 / EPEC), this protein is Glucose-6-phosphate isomerase.